The following is a 404-amino-acid chain: Acetate kinase (404 aa).

Asparagine 9 lines the Mg(2+) pocket. An ATP-binding site is contributed by lysine 16. Arginine 100 is a binding site for substrate. Catalysis depends on aspartate 157, which acts as the Proton donor/acceptor. ATP is bound by residues 215–219 (HLGNG), 290–292 (DMR), and 335–339 (GIGEN). Residue glutamate 386 participates in Mg(2+) binding.

It belongs to the acetokinase family. In terms of assembly, homodimer. Mg(2+) serves as cofactor. Requires Mn(2+) as cofactor.

It is found in the cytoplasm. It catalyses the reaction acetate + ATP = acetyl phosphate + ADP. Its pathway is metabolic intermediate biosynthesis; acetyl-CoA biosynthesis; acetyl-CoA from acetate: step 1/2. Its function is as follows. Catalyzes the formation of acetyl phosphate from acetate and ATP. Can also catalyze the reverse reaction. The protein is Acetate kinase of Methylocella silvestris (strain DSM 15510 / CIP 108128 / LMG 27833 / NCIMB 13906 / BL2).